Consider the following 268-residue polypeptide: Undecaprenyl-diphosphatase (268 aa).

The next 7 helical transmembrane spans lie at 43–63 (FWNT…VVIY), 83–103 (FVIG…IAGK), 109–129 (LFNP…LMWV), 144–164 (FPLP…IPGV), 184–204 (AAEF…AYDF), 218–238 (IVAI…KAFL), and 246–266 (FTFF…ALAL).

The protein belongs to the UppP family.

The protein localises to the cell inner membrane. The enzyme catalyses di-trans,octa-cis-undecaprenyl diphosphate + H2O = di-trans,octa-cis-undecaprenyl phosphate + phosphate + H(+). Functionally, catalyzes the dephosphorylation of undecaprenyl diphosphate (UPP). Confers resistance to bacitracin. The chain is Undecaprenyl-diphosphatase from Nitrobacter hamburgensis (strain DSM 10229 / NCIMB 13809 / X14).